We begin with the raw amino-acid sequence, 321 residues long: ATP-dependent 6-phosphofructokinase (321 aa).

Glycine 12 contributes to the ATP binding site. ADP-binding positions include 22-26 (RGVVR) and 55-60 (RYSVSD). Residues 73 to 74 (RF) and 103 to 106 (GDGS) each bind ATP. Aspartate 104 serves as a coordination point for Mg(2+). 127 to 129 (TID) is a substrate binding site. Aspartate 129 serves as the catalytic Proton acceptor. Arginine 156 is an ADP binding site. Residues arginine 164 and 171 to 173 (MGR) contribute to the substrate site. ADP-binding positions include 187-189 (GCE), arginine 213, and 215-217 (KRH). Residues glutamate 224, arginine 245, and 251 to 254 (HIQR) each bind substrate.

This sequence belongs to the phosphofructokinase type A (PFKA) family. ATP-dependent PFK group I subfamily. Prokaryotic clade 'B1' sub-subfamily. Homotetramer. The cofactor is Mg(2+).

Its subcellular location is the cytoplasm. It carries out the reaction beta-D-fructose 6-phosphate + ATP = beta-D-fructose 1,6-bisphosphate + ADP + H(+). It functions in the pathway carbohydrate degradation; glycolysis; D-glyceraldehyde 3-phosphate and glycerone phosphate from D-glucose: step 3/4. Its activity is regulated as follows. Allosterically activated by ADP and other diphosphonucleosides, and allosterically inhibited by phosphoenolpyruvate. Catalyzes the phosphorylation of D-fructose 6-phosphate to fructose 1,6-bisphosphate by ATP, the first committing step of glycolysis. The protein is ATP-dependent 6-phosphofructokinase of Haemophilus influenzae (strain PittEE).